We begin with the raw amino-acid sequence, 149 residues long: Sperm surface protein Sp17 (149 aa).

Over residues 83–96 (CEQELAKSSGREET) the composition is skewed to basic and acidic residues. A disordered region spans residues 83 to 114 (CEQELAKSSGREETPVTPFEESTEEEREQEEA). Over residues 103-113 (ESTEEEREQEE) the composition is skewed to acidic residues. Residues 112 to 141 (EEAAALKIQSLFRGHVAREEVKKMKSDKNE) form the IQ domain.

Homodimer. May interact with ROPN1. In terms of tissue distribution, testis- and sperm-specific.

Its subcellular location is the membrane. Sperm surface zona pellucida binding protein. Helps to bind spermatozoa to the zona pellucida with high affinity. Might function in binding zona pellucida and carbohydrates. The chain is Sperm surface protein Sp17 (Spa17) from Mus musculus (Mouse).